The sequence spans 957 residues: Glycine dehydrogenase (decarboxylating) (957 aa).

Lysine 708 bears the N6-(pyridoxal phosphate)lysine mark.

The protein belongs to the GcvP family. As to quaternary structure, the glycine cleavage system is composed of four proteins: P, T, L and H. Requires pyridoxal 5'-phosphate as cofactor.

It carries out the reaction N(6)-[(R)-lipoyl]-L-lysyl-[glycine-cleavage complex H protein] + glycine + H(+) = N(6)-[(R)-S(8)-aminomethyldihydrolipoyl]-L-lysyl-[glycine-cleavage complex H protein] + CO2. Functionally, the glycine cleavage system catalyzes the degradation of glycine. The P protein binds the alpha-amino group of glycine through its pyridoxal phosphate cofactor; CO(2) is released and the remaining methylamine moiety is then transferred to the lipoamide cofactor of the H protein. In Escherichia coli O81 (strain ED1a), this protein is Glycine dehydrogenase (decarboxylating).